The chain runs to 432 residues: Alpha-2 adrenergic receptor (432 aa).

Topologically, residues 1-32 (MDPLNATGMDAFTAIHLNASWSADSGYSLAAI) are extracellular. N-linked (GlcNAc...) asparagine glycosylation is found at N5 and N18. A helical membrane pass occupies residues 33 to 57 (ASIAALVSFLILFTVVGNILVVIAV). The Cytoplasmic portion of the chain corresponds to 58-69 (LTSRALKAPQNL). A helical transmembrane segment spans residues 70-95 (FLVSLATADILVATLVMPFSLANELM). Topologically, residues 96 to 105 (GYWYFGKVWC) are extracellular. C105 and C183 are joined by a disulfide. A helical membrane pass occupies residues 106-128 (GIYLALDVLFCTSSIVHLCAISL). The Cytoplasmic segment spans residues 129 to 149 (DRYWSVTQAVEYNLKRTPKRV). A helical transmembrane segment spans residues 150-172 (KCIIVIVWLISAFISSPPLLSID). At 173 to 188 (SNNYISSQPQCMLNDD) the chain is on the extracellular side. A helical membrane pass occupies residues 189–212 (TWYILSSSMASFFAPCLIMILVYI). The Cytoplasmic portion of the chain corresponds to 213–356 (RIYQVAKTRT…QAREKRFTFV (144 aa)). Positions 222-319 (TRSMSGKEPR…SISKQSARIS (98 aa)) are disordered. Polar residues-rich tracts occupy residues 235–246 (VTQTENGLNKAN) and 265–275 (SQRTVTIGQQT). Residues 288-300 (GKGHKPQRQDSQR) are compositionally biased toward basic and acidic residues. A compositionally biased stretch (polar residues) spans 309 to 319 (SSISKQSARIS). A helical membrane pass occupies residues 357–380 (LAVVMGVFVVCWFPFFFSYSLHAV). Residues 381–393 (CRDYCKIPDTLFK) are Extracellular-facing. A helical transmembrane segment spans residues 394–413 (FFWIGYCNSSLNPAIYTIFN). The Cytoplasmic portion of the chain corresponds to 414–432 (RDFRRAFQKILCKSWKKSF).

This sequence belongs to the G-protein coupled receptor 1 family.

The protein localises to the cell membrane. In terms of biological role, alpha-2 adrenergic receptors mediate the catecholamine-induced inhibition of adenylate cyclase through the action of G proteins. The polypeptide is Alpha-2 adrenergic receptor (Labrus ossifagus (Cuckoo wrasse)).